Reading from the N-terminus, the 221-residue chain is MGRFRGGLRCIKYLLLGFNLLFWLAGSAVIAFGLWFRFGGTIKDLSSEEKSPEYFYVGLYVLVGAGALMMAVGFFGCCGAMRESQCVLGSFFTCLLVIFAAEVTTGVFAFIGKDVAIRHVQSMYEEAYSDYVRDRGRGNGTLITFHSAFQCCGKESSEQVQPTCPKELPGHKNCIDKIETIISVKLQLIGIVGIGIAGLTIFGMIFSMVLCCAIRNSRDVI.

The Cytoplasmic portion of the chain corresponds to 1–13; the sequence is MGRFRGGLRCIKY. Residues 14–34 traverse the membrane as a helical segment; sequence LLLGFNLLFWLAGSAVIAFGL. Residues 35 to 54 are Extracellular-facing; the sequence is WFRFGGTIKDLSSEEKSPEY. The helical transmembrane segment at 55–75 threads the bilayer; the sequence is FYVGLYVLVGAGALMMAVGFF. Residues 76 to 90 lie on the Cytoplasmic side of the membrane; it reads GCCGAMRESQCVLGS. The chain crosses the membrane as a helical span at residues 91-111; sequence FFTCLLVIFAAEVTTGVFAFI. At 112–188 the chain is on the extracellular side; it reads GKDVAIRHVQ…ETIISVKLQL (77 aa). N-linked (GlcNAc...) asparagine glycosylation occurs at Asn139. Residues 189 to 209 traverse the membrane as a helical segment; sequence IGIVGIGIAGLTIFGMIFSMV. At 210–221 the chain is on the cytoplasmic side; sequence LCCAIRNSRDVI.

This sequence belongs to the tetraspanin (TM4SF) family. In terms of tissue distribution, expression is restricted to the nervous system.

Its subcellular location is the membrane. In terms of biological role, may play a role in signalling in oligodendrocytes in the early stages of their terminal differentiation into myelin-forming glia and may also function in stabilizing the mature sheath. The sequence is that of Tetraspanin-2 (Tspan2) from Rattus norvegicus (Rat).